The chain runs to 211 residues: Protein-methionine-sulfoxide reductase heme-binding subunit MsrQ (211 aa).

Transmembrane regions (helical) follow at residues 10–30 (WLKV…VWAI), 82–102 (LWCF…ELGV), 116–136 (PYLT…FTST), 153–173 (FVYL…KIIS), and 178–198 (IYAG…LSLF).

It belongs to the MsrQ family. Heterodimer of a catalytic subunit (MsrP) and a heme-binding subunit (MsrQ). It depends on FMN as a cofactor. Heme b is required as a cofactor.

Its subcellular location is the cell inner membrane. Part of the MsrPQ system that repairs oxidized periplasmic proteins containing methionine sulfoxide residues (Met-O), using respiratory chain electrons. Thus protects these proteins from oxidative-stress damage caused by reactive species of oxygen and chlorine generated by the host defense mechanisms. MsrPQ is essential for the maintenance of envelope integrity under bleach stress, rescuing a wide series of structurally unrelated periplasmic proteins from methionine oxidation, including the primary periplasmic chaperone SurA and the lipoprotein Pal. MsrQ provides electrons for reduction to the reductase catalytic subunit MsrP, using the quinone pool of the respiratory chain. This is Protein-methionine-sulfoxide reductase heme-binding subunit MsrQ from Escherichia coli (strain 55989 / EAEC).